Consider the following 87-residue polypeptide: U3-theraphotoxin-Hhn1a 15 (87 aa).

An N-terminal signal peptide occupies residues 1–24 (MVNMKASMFLTFAGLVLLLVVCYA). Positions 25–52 (SESEEKEFPKEMLSSIFAVDNDFKQEER) are excised as a propeptide. 3 disulfides stabilise this stretch: cysteine 54–cysteine 67, cysteine 61–cysteine 72, and cysteine 66–cysteine 79.

It belongs to the neurotoxin 10 (Hwtx-1) family. 51 (Hntx-8) subfamily. Hntx-8 sub-subfamily. Expressed by the venom gland.

It localises to the secreted. Functionally, ion channel inhibitor. This chain is U3-theraphotoxin-Hhn1a 15, found in Cyriopagopus hainanus (Chinese bird spider).